Consider the following 222-residue polypeptide: Phosphoglycolate phosphatase (222 aa).

The active-site Nucleophile is the aspartate 12. Aspartate 12, aspartate 14, and aspartate 175 together coordinate Mg(2+).

It belongs to the HAD-like hydrolase superfamily. CbbY/CbbZ/Gph/YieH family. Mg(2+) is required as a cofactor.

It carries out the reaction 2-phosphoglycolate + H2O = glycolate + phosphate. It functions in the pathway organic acid metabolism; glycolate biosynthesis; glycolate from 2-phosphoglycolate: step 1/1. Specifically catalyzes the dephosphorylation of 2-phosphoglycolate. Is involved in the dissimilation of the intracellular 2-phosphoglycolate formed during the DNA repair of 3'-phosphoglycolate ends, a major class of DNA lesions induced by oxidative stress. In Chromobacterium violaceum (strain ATCC 12472 / DSM 30191 / JCM 1249 / CCUG 213 / NBRC 12614 / NCIMB 9131 / NCTC 9757 / MK), this protein is Phosphoglycolate phosphatase.